The sequence spans 484 residues: Xylulose kinase (484 aa).

A substrate-binding site is contributed by 77–78; the sequence is MH. The active-site Proton acceptor is D233.

It belongs to the FGGY kinase family. As to quaternary structure, homodimer.

It catalyses the reaction D-xylulose + ATP = D-xylulose 5-phosphate + ADP + H(+). It carries out the reaction 1-deoxy-D-xylulose + ATP = 1-deoxy-D-xylulose 5-phosphate + ADP + H(+). Sugar binding is accompanied by a dramatic hinge-bending movement that enhances interactions with Mg-ATP. Functionally, catalyzes the phosphorylation of D-xylulose to D-xylulose 5-phosphate. Also catalyzes the phosphorylation of 1-deoxy-D-xylulose to 1-deoxy-D-xylulose 5-phosphate, with lower efficiency. Can also use D-ribulose, xylitol and D-arabitol, but D-xylulose is preferred over the other substrates. Has a weak substrate-independent Mg-ATP-hydrolyzing activity. The sequence is that of Xylulose kinase from Escherichia coli (strain K12).